An 80-amino-acid chain; its full sequence is Exodeoxyribonuclease 7 small subunit (80 aa).

It belongs to the XseB family. As to quaternary structure, heterooligomer composed of large and small subunits.

The protein localises to the cytoplasm. The catalysed reaction is Exonucleolytic cleavage in either 5'- to 3'- or 3'- to 5'-direction to yield nucleoside 5'-phosphates.. In terms of biological role, bidirectionally degrades single-stranded DNA into large acid-insoluble oligonucleotides, which are then degraded further into small acid-soluble oligonucleotides. The sequence is that of Exodeoxyribonuclease 7 small subunit from Rickettsia conorii (strain ATCC VR-613 / Malish 7).